Reading from the N-terminus, the 501-residue chain is Betaine aldehyde dehydrogenase, chloroplastic (501 aa).

The transit peptide at 1–7 directs the protein to the chloroplast; the sequence is MAIRVPS. 238–243 is an NAD(+) binding site; sequence GSTATG. E260 functions as the Proton acceptor in the catalytic mechanism. C294 serves as the catalytic Nucleophile.

Belongs to the aldehyde dehydrogenase family. As to quaternary structure, homodimer.

The protein localises to the plastid. Its subcellular location is the chloroplast. The catalysed reaction is betaine aldehyde + NAD(+) + H2O = glycine betaine + NADH + 2 H(+). Its pathway is amine and polyamine biosynthesis; betaine biosynthesis via choline pathway; betaine from betaine aldehyde: step 1/1. The protein is Betaine aldehyde dehydrogenase, chloroplastic (BADH4) of Amaranthus hypochondriacus (Prince-of-Wales feather).